Here is a 411-residue protein sequence, read N- to C-terminus: Dual-specificity RNA methyltransferase RlmN (411 aa).

Glutamate 125 functions as the Proton acceptor in the catalytic mechanism. Positions 131–380 (EEGRGTLCIS…IRTPRGRDIL (250 aa)) constitute a Radical SAM core domain. A disulfide bridge links cysteine 138 with cysteine 383. [4Fe-4S] cluster contacts are provided by cysteine 145, cysteine 149, and cysteine 152. S-adenosyl-L-methionine is bound by residues 209–210 (GE), serine 241, 263–265 (SLH), and asparagine 340. Cysteine 383 functions as the S-methylcysteine intermediate in the catalytic mechanism.

It belongs to the radical SAM superfamily. RlmN family. [4Fe-4S] cluster is required as a cofactor.

It localises to the cytoplasm. It carries out the reaction adenosine(2503) in 23S rRNA + 2 reduced [2Fe-2S]-[ferredoxin] + 2 S-adenosyl-L-methionine = 2-methyladenosine(2503) in 23S rRNA + 5'-deoxyadenosine + L-methionine + 2 oxidized [2Fe-2S]-[ferredoxin] + S-adenosyl-L-homocysteine. The catalysed reaction is adenosine(37) in tRNA + 2 reduced [2Fe-2S]-[ferredoxin] + 2 S-adenosyl-L-methionine = 2-methyladenosine(37) in tRNA + 5'-deoxyadenosine + L-methionine + 2 oxidized [2Fe-2S]-[ferredoxin] + S-adenosyl-L-homocysteine. In terms of biological role, specifically methylates position 2 of adenine 2503 in 23S rRNA and position 2 of adenine 37 in tRNAs. m2A2503 modification seems to play a crucial role in the proofreading step occurring at the peptidyl transferase center and thus would serve to optimize ribosomal fidelity. This is Dual-specificity RNA methyltransferase RlmN from Brucella canis (strain ATCC 23365 / NCTC 10854 / RM-666).